We begin with the raw amino-acid sequence, 112 residues long: DNA-binding protein TGAM_1196 (112 aa).

The protein belongs to the PDCD5 family.

In Thermococcus gammatolerans (strain DSM 15229 / JCM 11827 / EJ3), this protein is DNA-binding protein TGAM_1196.